We begin with the raw amino-acid sequence, 423 residues long: Putative competence-damage inducible protein (423 aa).

Belongs to the CinA family.

The sequence is that of Putative competence-damage inducible protein from Streptococcus pyogenes serotype M12 (strain MGAS2096).